Here is a 640-residue protein sequence, read N- to C-terminus: Influenza virus NS1A-binding protein homolog B (640 aa).

Residues 32-100 (CDVRLLVCGH…AYTAQLKADK (69 aa)) form the BTB domain. Residues 135-186 (AISYRNFASSMADGRLLGKIDGYIQDHLHEISEQDDFLKLPRLKLEVMLEDN) form the BACK domain. A disordered region spans residues 257-278 (KKPPRERDEMGSGASGSISPSN). The segment covering 267–278 (GSGASGSISPSN) has biased composition (low complexity). Kelch repeat units lie at residues 366–412 (KLIA…VLMG), 413–460 (EVYV…SLQN), 462–509 (LFVV…ELSG), 510–556 (YMYV…VYEG), 557–603 (KLFV…VLNN), and 605–640 (LCAVGGFDGNEFLNSMEVYNLEKNEWSPFIEALGKN).

The protein localises to the cytoplasm. The protein resides in the cytoskeleton. It is found in the nucleus. Plays a role in cell division and in the dynamic organization of the actin skeleton as a stabilizer of actin filaments by association with F-actin through Kelch repeats. The polypeptide is Influenza virus NS1A-binding protein homolog B (ivns1abpb) (Danio rerio (Zebrafish)).